Reading from the N-terminus, the 91-residue chain is Class I hydrophobin E (91 aa).

A signal peptide spans 1 to 16; it reads MKFSIAAIALAAVAVA. Disulfide bonds link Cys30–Cys72, Cys42–Cys64, Cys43–Cys55, and Cys73–Cys89. The N-linked (GlcNAc...) asparagine glycan is linked to Asn83.

The protein belongs to the fungal hydrophobin family.

The protein resides in the secreted. The protein localises to the cell wall. Its subcellular location is the vacuole. It is found in the cytoplasmic vesicle. Functionally, aerial growth, conidiation, and dispersal of filamentous fungi in the environment rely upon a capability of their secreting small amphipathic proteins called hydrophobins (HPBs) with low sequence identity. Class I can self-assemble into an outermost layer of rodlet bundles on aerial cell surfaces, conferring cellular hydrophobicity that supports fungal growth, development and dispersal; whereas Class II form highly ordered films at water-air interfaces through intermolecular interactions but contribute nothing to the rodlet structure. Hyd1E contributes to certain cell wall-related features, such as hydrophobicity but is not involved in cell wall-related events during fungal proliferation in host hemocoel. Does not contribute to conidial hydrophobicity. The sequence is that of Class I hydrophobin E from Beauveria bassiana (strain ARSEF 2860) (White muscardine disease fungus).